A 170-amino-acid polypeptide reads, in one-letter code: Co-chaperone protein HscB homolog (170 aa).

In terms of domain architecture, J spans 5-79; that stretch reads DHFSLFGLPA…RARYLCEQAG (75 aa).

The protein belongs to the HscB family. Interacts with HscA and stimulates its ATPase activity.

Functionally, co-chaperone involved in the maturation of iron-sulfur cluster-containing proteins. Seems to help targeting proteins to be folded toward HscA. The protein is Co-chaperone protein HscB homolog of Bordetella petrii (strain ATCC BAA-461 / DSM 12804 / CCUG 43448).